A 326-amino-acid chain; its full sequence is DnaJ homolog subfamily B member 6 (326 aa).

A J domain is found at 2–69 (VDYYEVLGVQ…KKRDIYDKYG (68 aa)). Residues 2-146 (VDYYEVLGVQ…TGSFFSAFSG (145 aa)) form an interaction with HSP70 region. The interaction with KRT18 stretch occupies residues 119-242 (FEDFFGNRRG…ADDDALAEER (124 aa)). Arg-135 carries the omega-N-methylarginine modification. Residues 249–326 (ALPAQPAGLR…KKKKSTKGNH (78 aa)) form a disordered region. A Phosphoserine modification is found at Ser-277.

Homooligomer. Interacts with BAG3, HSPB8 and STUB1. Interacts with ALKBH1. Interacts with HSP70, KRT18 and PTTG.

It is found in the cytoplasm. The protein localises to the perinuclear region. The protein resides in the nucleus. It localises to the myofibril. Its subcellular location is the sarcomere. It is found in the z line. Functionally, has a stimulatory effect on the ATPase activity of HSP70 in a dose-dependent and time-dependent manner and hence acts as a co-chaperone of HSP70. Plays an indispensable role in the organization of KRT8/KRT18 filaments. Acts as an endogenous molecular chaperone for neuronal proteins including huntingtin. Suppresses aggregation and toxicity of polyglutamine-containing, aggregation-prone proteins. Also reduces cellular toxicity and caspase-3 activity. The chain is DnaJ homolog subfamily B member 6 (DNAJB6) from Pongo abelii (Sumatran orangutan).